We begin with the raw amino-acid sequence, 1755 residues long: Transposon Ty1-OL Gag-Pol polyprotein (1755 aa).

3 stretches are compositionally biased toward polar residues: residues Met1–Ser23, Thr48–Ser60, and Gln127–Phe152. Disordered regions lie at residues Met1–Gln93, Pro126–Pro173, and Gly352–Thr421. Over residues Thr153 to Thr165 the composition is skewed to low complexity. An RNA-binding region spans residues Asn299–His401. A compositionally biased stretch (low complexity) spans Asn402–Ser418. Ser416 carries the phosphoserine modification. Asp461 functions as the For protease activity; shared with dimeric partner in the catalytic mechanism. Residues Asn583–Cys640 are integrase-type zinc finger-like. Positions Asn660–Pro835 constitute an Integrase catalytic domain. Mg(2+) contacts are provided by Asp671 and Asp736. Disordered regions lie at residues Ser956–Lys1087, Arg1092–Pro1111, and Asp1130–Ala1171. The segment covering Ser960–Thr969 has biased composition (low complexity). Residues Ser1005–Thr1015 show a composition bias toward polar residues. The span at Glu1038 to Ser1053 shows a compositional bias: basic and acidic residues. Polar residues-rich tracts occupy residues Tyr1054 to Asp1082 and Pro1101 to Pro1111. A Bipartite nuclear localization signal motif is present at residues Lys1178 to Arg1212. The region spanning Asn1338–Gln1476 is the Reverse transcriptase Ty1/copia-type domain. Residues Asp1346, Asp1427, Asp1428, Asp1610, Glu1652, and Asp1685 each coordinate Mg(2+). The 143-residue stretch at Asp1610–Lys1752 folds into the RNase H Ty1/copia-type domain.

The capsid protein forms a homotrimer, from which the VLPs are assembled. The protease is a homodimer, whose active site consists of two apposed aspartic acid residues. Post-translationally, initially, virus-like particles (VLPs) are composed of the structural unprocessed proteins Gag and Gag-Pol, and also contain the host initiator methionine tRNA (tRNA(i)-Met) which serves as a primer for minus-strand DNA synthesis, and a dimer of genomic Ty RNA. Processing of the polyproteins occurs within the particle and proceeds by an ordered pathway, called maturation. First, the protease (PR) is released by autocatalytic cleavage of the Gag-Pol polyprotein yielding capsid protein p45 and a Pol-p154 precursor protein. This cleavage is a prerequisite for subsequent processing of Pol-p154 at the remaining sites to release the mature structural and catalytic proteins. Maturation takes place prior to the RT reaction and is required to produce transposition-competent VLPs.

It is found in the cytoplasm. The protein resides in the nucleus. The enzyme catalyses DNA(n) + a 2'-deoxyribonucleoside 5'-triphosphate = DNA(n+1) + diphosphate. It carries out the reaction Endonucleolytic cleavage to 5'-phosphomonoester.. Its function is as follows. Capsid protein (CA) is the structural component of the virus-like particle (VLP), forming the shell that encapsulates the retrotransposons dimeric RNA genome. The particles are assembled from trimer-clustered units and there are holes in the capsid shells that allow for the diffusion of macromolecules. CA also has nucleocapsid-like chaperone activity, promoting primer tRNA(i)-Met annealing to the multipartite primer-binding site (PBS), dimerization of Ty1 RNA and initiation of reverse transcription. The aspartyl protease (PR) mediates the proteolytic cleavages of the Gag and Gag-Pol polyproteins after assembly of the VLP. Functionally, reverse transcriptase/ribonuclease H (RT) is a multifunctional enzyme that catalyzes the conversion of the retro-elements RNA genome into dsDNA within the VLP. The enzyme displays a DNA polymerase activity that can copy either DNA or RNA templates, and a ribonuclease H (RNase H) activity that cleaves the RNA strand of RNA-DNA heteroduplexes during plus-strand synthesis and hydrolyzes RNA primers. The conversion leads to a linear dsDNA copy of the retrotransposon that includes long terminal repeats (LTRs) at both ends. In terms of biological role, integrase (IN) targets the VLP to the nucleus, where a subparticle preintegration complex (PIC) containing at least integrase and the newly synthesized dsDNA copy of the retrotransposon must transit the nuclear membrane. Once in the nucleus, integrase performs the integration of the dsDNA into the host genome. The chain is Transposon Ty1-OL Gag-Pol polyprotein (TY1B-OL) from Saccharomyces cerevisiae (strain ATCC 204508 / S288c) (Baker's yeast).